The chain runs to 2968 residues: Polyketide synthase 37 (2968 aa).

One can recognise a Ketosynthase family 3 (KS3) domain in the interval 32–454; sequence KEPIAIIGIG…GSNSSLFLSS (423 aa). Residues C198, H338, and H378 each act as for beta-ketoacyl synthase activity in the active site. Residues 624 to 950 are malonyl-CoA:ACP transacylase (MAT) domain; it reads FIFSGQGQQW…LSTLSKNSNS (327 aa). S718 functions as the For malonyltransferase activity in the catalytic mechanism. The N-terminal hotdog fold stretch occupies residues 1017 to 1157; that stretch reads PPMFISLDRK…GIIKYGTNYL (141 aa). Residues 1017–1350 form the PKS/mFAS DH domain; it reads PPMFISLDRK…FKGINSSSSS (334 aa). Residues 1031–1345 are dehydratase (DH) domain; the sequence is TPSFEVRLNQ…LTNLEFKGIN (315 aa). The active-site Proton acceptor; for dehydratase activity is the H1049. A C-terminal hotdog fold region spans residues 1183–1350; sequence FKSFNSNEFY…FKGINSSSSS (168 aa). D1257 functions as the Proton donor; for dehydratase activity in the catalytic mechanism. The disordered stretch occupies residues 1522-1547; it reads SCGGGGGSTNNTISNSSSSISSIDNG. A compositionally biased stretch (low complexity) spans 1530–1547; that stretch reads TNNTISNSSSSISSIDNG. The tract at residues 1718-2053 is enoyl reductase (ER) domain; it reads GIISDLKIKQ…SGNHIGKILI (336 aa). The segment at 2083–2277 is ketoreductase (KR) domain; that stretch reads TYIFTGFGGL…LKSSCIHLAS (195 aa). Positions 2379–2400 are disordered; it reads GDGSFDDLNQLEDEGQQGFGNG. The Carrier domain maps to 2421-2498; the sequence is FDNDFYTKSI…STVELIKNKL (78 aa). O-(pantetheine 4'-phosphoryl)serine is present on S2458. Positions 2568 to 2589 are disordered; sequence SSSSNNSNSKNELTSPPPSAKR. The segment at 2707 to 2968 is chalcone synthase; it reads ISHVVGVTST…IEAILFKLIK (262 aa). The active site involves C2747.

Requires pantetheine 4'-phosphate as cofactor.

It carries out the reaction (E)-4-coumaroyl-CoA + 3 malonyl-CoA + 3 H(+) = 2',4,4',6'-tetrahydroxychalcone + 3 CO2 + 4 CoA. The catalysed reaction is hexanoyl-CoA + 3 malonyl-CoA + 3 H(+) = 2,4,6-trihydroxyphenylhexan-1-one + 3 CO2 + 4 CoA. It functions in the pathway secondary metabolite biosynthesis; flavonoid biosynthesis. Functionally, polyketide synthase; part of the gene cluster that mediates the biosynthesis of DIF-1 (Differentiation Inducing Factor-1), a signal molecule involved in the differentiation of pstO (prestalk-O) cells. The three-step process begins with the formation of (2,4,6-trihydroxyphenyl)-1-hexan-1-one (THPH) by the polyketide synthase StlB. THPH is then dichlorinated by the flavin-dependent halogenase ChlA. The last step of DIF-1 biosynthesis is the O-methylation of dichloro-THPH (or des-methyl-DIF-1) by the methyltransferase DmtA to yield DIF-1. This chain is Polyketide synthase 37 (StlB), found in Dictyostelium discoideum (Social amoeba).